The following is a 235-amino-acid chain: Large ribosomal subunit protein uL1 (235 aa).

This sequence belongs to the universal ribosomal protein uL1 family. Part of the 50S ribosomal subunit.

Its function is as follows. Binds directly to 23S rRNA. The L1 stalk is quite mobile in the ribosome, and is involved in E site tRNA release. Protein L1 is also a translational repressor protein, it controls the translation of the L11 operon by binding to its mRNA. The sequence is that of Large ribosomal subunit protein uL1 from Prochlorococcus marinus (strain MIT 9303).